Consider the following 172-residue polypeptide: Interferon tau-3 (172 aa).

2 disulfide bridges follow: cysteine 1/cysteine 99 and cysteine 29/cysteine 139.

It belongs to the alpha/beta interferon family. IFN-alphaII subfamily. Constitutively and exclusively expressed in the mononuclear cells of the extraembryonic trophectoderm.

It is found in the secreted. Functionally, paracrine hormone primarily responsible for maternal recognition of pregnancy. Interacts with endometrial receptors, probably type I interferon receptors, and blocks estrogen receptor expression, preventing the estrogen-induced increase in oxytocin receptor expression in the endometrium. This results in the suppression of the pulsatile endometrial release of the luteolytic hormone prostaglandin F2-alpha, hindering the regression of the corpus luteum (luteolysis) and therefore a return to ovarian cyclicity. This, and a possible direct effect of IFN-tau on prostaglandin synthesis, leads in turn to continued ovarian progesterone secretion, which stimulates the secretion by the endometrium of the nutrients required for the growth of the conceptus. In summary, displays particularly high antiviral and antiproliferative potency concurrently with particular weak cytotoxicity, high antiluteolytic activity and immunomodulatory properties. In contrast with other IFNs, IFN-tau is not virally inducible. This chain is Interferon tau-3 (IFNT3), found in Ovis aries (Sheep).